The following is a 378-amino-acid chain: Chaperone protein DnaJ (378 aa).

The 65-residue stretch at 5 to 69 (EYYDRLGVSK…QKRAAYDQYG (65 aa)) folds into the J domain. The CR-type zinc-finger motif lies at 134–216 (GVEKEVSYNR…CHGTGHEKQA (83 aa)). 8 residues coordinate Zn(2+): Cys147, Cys150, Cys164, Cys167, Cys190, Cys193, Cys204, and Cys207. 4 CXXCXGXG motif repeats span residues 147–154 (CGTCLGSG), 164–171 (CRKCHGSG), 190–197 (CDICHGSG), and 204–211 (CQTCHGTG).

Belongs to the DnaJ family. As to quaternary structure, homodimer. The cofactor is Zn(2+).

The protein resides in the cytoplasm. Functionally, participates actively in the response to hyperosmotic and heat shock by preventing the aggregation of stress-denatured proteins and by disaggregating proteins, also in an autonomous, DnaK-independent fashion. Unfolded proteins bind initially to DnaJ; upon interaction with the DnaJ-bound protein, DnaK hydrolyzes its bound ATP, resulting in the formation of a stable complex. GrpE releases ADP from DnaK; ATP binding to DnaK triggers the release of the substrate protein, thus completing the reaction cycle. Several rounds of ATP-dependent interactions between DnaJ, DnaK and GrpE are required for fully efficient folding. Also involved, together with DnaK and GrpE, in the DNA replication of plasmids through activation of initiation proteins. The chain is Chaperone protein DnaJ from Streptococcus pyogenes serotype M6 (strain ATCC BAA-946 / MGAS10394).